The sequence spans 95 residues: Protein TusB (95 aa).

It belongs to the DsrH/TusB family. As to quaternary structure, heterohexamer, formed by a dimer of trimers. The hexameric TusBCD complex contains 2 copies each of TusB, TusC and TusD. The TusBCD complex interacts with TusE.

The protein localises to the cytoplasm. In terms of biological role, part of a sulfur-relay system required for 2-thiolation of 5-methylaminomethyl-2-thiouridine (mnm(5)s(2)U) at tRNA wobble positions. This is Protein TusB from Salmonella agona (strain SL483).